Reading from the N-terminus, the 205-residue chain is Holliday junction resolvase RecU (205 aa).

The disordered stretch occupies residues 1–22 (MAINYPAGTRRRTAQAKNTMRT). Mg(2+)-binding residues include T90, D92, D105, and Q124.

This sequence belongs to the RecU family. It depends on Mg(2+) as a cofactor.

It is found in the cytoplasm. The enzyme catalyses Endonucleolytic cleavage at a junction such as a reciprocal single-stranded crossover between two homologous DNA duplexes (Holliday junction).. Endonuclease that resolves Holliday junction intermediates in genetic recombination. Cleaves mobile four-strand junctions by introducing symmetrical nicks in paired strands. Promotes annealing of linear ssDNA with homologous dsDNA. Required for DNA repair, homologous recombination and chromosome segregation. The chain is Holliday junction resolvase RecU from Leuconostoc citreum (strain KM20).